The primary structure comprises 960 residues: Dynamin-like GTPase OPA1, mitochondrial (960 aa).

Residues 1–87 constitute a mitochondrion transit peptide; the sequence is MWRAGRAAVA…IKYGYQPRRN (87 aa). Residues 88 to 96 are Mitochondrial matrix-facing; sequence FWPARLAAR. Residues 97–113 traverse the membrane as a helical segment; that stretch reads LLKLRYIILGSAVGGGY. The Mitochondrial intermembrane segment spans residues 114–770; that stretch reads TAKKTFDEWK…NAIENMIGPD (657 aa). Residues 210–254 are a coiled coil; it reads SDKEKIDQLQEELLHTQLKYQRILERLEKENKELRKLVLQKDDKG. The short motif at 217 to 222 is the LQQQIQ motif element; the sequence is QLQEEL. Residue lysine 228 is modified to N6-acetyllysine. The Dynamin-type G domain maps to 285–561; sequence QDHLPRVVVV…FWKMVRESVE (277 aa). Positions 295–302 are G1 motif; the sequence is GDQSAGKT. The GTP site is built by serine 298, glycine 300, lysine 301, threonine 302, serine 303, and glycine 317. Threonine 302 serves as a coordination point for Mg(2+). Residues 321 to 324 are G2 motif; the sequence is MMTR. Residues threonine 323 and aspartate 398 each contribute to the Mg(2+) site. The G3 motif stretch occupies residues 398–401; that stretch reads DLPG. Residues 467 to 470 are G4 motif; sequence TKVD. GTP is bound by residues lysine 468, aspartate 470, and threonine 503. Residues 501-504 are G5 motif; that stretch reads VVTG. Stalk region stretches follow at residues 589–836 and 874–928; these read DRNE…IKDT and CNDV…VKLL. Residues 736–856 form a paddle region region; that stretch reads SDKQQWDAAI…KTALNHCNLC (121 aa). Residues 771-781 lie within the membrane without spanning it; sequence WKKRWMYWKNR. The Mitochondrial intermembrane segment spans residues 782-960; that stretch reads TQEQCVHNET…AFIEALHQEK (179 aa). Cysteine 856 and cysteine 874 form a disulfide bridge. A coiled-coil region spans residues 895–960; that stretch reads RQQLTNTEVR…AFIEALHQEK (66 aa).

It belongs to the TRAFAC class dynamin-like GTPase superfamily. Dynamin/Fzo/YdjA family. In terms of assembly, oligomeric complex consisting of membrane-bound and soluble forms of OPA1. Interacts with RCC1L; RCC1L acts as a guanine nucleotide exchange factor (GEF) for OPA1 by exchanging bound GDP for free GTP. Interacts with CHCHD3 and IMMT; these interactions occur preferentially with soluble OPA1 forms. Interacts with PRELID1. Post-translationally, cleaved by OMA1 or YME1L downstream of the transmembrane region in response to different signals to generate soluble forms. Cleaved by OMA1 at position S1 following stress conditions, generating the short soluble form (Dynamin-like GTPase OPA1, short form; S-OPA1). AFG3L2 is involved in the regulation of OMA1-dependent processing of OPA1. PARL-dependent proteolytic processing releases an antiapoptotic soluble form not required for mitochondrial fusion. In terms of processing, cleavage at position S2 by YME1L is required to mediate oxidative phosphorylation (OXPHOS)-induced mitochondrial fusion. Cleavage occurs in the sequence motif Leu-Gln-Gln-Gln-Ile-Gln (LQQQIQ). Cleavage at position S3 by YME1L is required for membrane tubulation. Detected in brain (at protein level). Detected in brain, brain stem, heart, kidney, liver and skeletal muscle.

The protein localises to the mitochondrion inner membrane. It localises to the mitochondrion intermembrane space. The enzyme catalyses GTP + H2O = GDP + phosphate + H(+). Its activity is regulated as follows. Activated by guanine nucleotide exchange factor RCC1L. Its function is as follows. Dynamin-related GTPase that is essential for normal mitochondrial morphology by mediating fusion of the mitochondrial inner membranes, regulating cristae morphology and maintaining respiratory chain function. Exists in two forms: the transmembrane, long form (Dynamin-like GTPase OPA1, long form; L-OPA1), which is tethered to the inner mitochondrial membrane, and the short soluble form (Dynamin-like GTPase OPA1, short form; S-OPA1), which results from proteolytic cleavage and localizes in the intermembrane space. Both forms (L-OPA1 and S-OPA1) cooperate to catalyze the fusion of the mitochondrial inner membrane. The equilibrium between L-OPA1 and S-OPA1 is essential: excess levels of S-OPA1, produced by cleavage by OMA1 following loss of mitochondrial membrane potential, lead to an impaired equilibrium between L-OPA1 and S-OPA1, inhibiting mitochondrial fusion. The balance between L-OPA1 and S-OPA1 also influences cristae shape and morphology. Involved in remodeling cristae and the release of cytochrome c during apoptosis. Proteolytic processing by PARL in response to intrinsic apoptotic signals may lead to disassembly of OPA1 oligomers and release of the caspase activator cytochrome C (CYCS) into the mitochondrial intermembrane space. Acts as a regulator of T-helper Th17 cells, which are characterized by cells with fused mitochondria with tight cristae, by mediating mitochondrial membrane remodeling: OPA1 is required for interleukin-17 (IL-17) production. Its role in mitochondrial morphology is required for mitochondrial genome maintenance. Constitutes the transmembrane long form (L-OPA1) that plays a central role in mitochondrial inner membrane fusion and cristae morphology. L-OPA1 and the soluble short form (S-OPA1) form higher-order helical assemblies that coordinate the fusion of mitochondrial inner membranes. Inner membrane-anchored L-OPA1 molecules initiate membrane remodeling by recruiting soluble S-OPA1 to rapidly polymerize into a flexible cylindrical scaffold encaging the mitochondrial inner membrane. Once at the membrane surface, the formation of S-OPA1 helices induce bilayer curvature. OPA1 dimerization through the paddle region, which inserts into cardiolipin-containing membrane, promotes GTP hydrolysis and the helical assembly of a flexible OPA1 lattice on the membrane, which drives membrane curvature and mitochondrial fusion. Plays a role in the maintenance and remodeling of mitochondrial cristae, some invaginations of the mitochondrial inner membrane that provide an increase in the surface area. Probably acts by forming helical filaments at the inside of inner membrane tubes with the shape and dimensions of crista junctions. The equilibrium between L-OPA1 and S-OPA1 influences cristae shape and morphology: increased L-OPA1 levels promote cristae stacking and elongated mitochondria, while increased S-OPA1 levels correlated with irregular cristae packing and round mitochondria shape. In terms of biological role, constitutes the soluble short form (S-OPA1) generated by cleavage by OMA1, which plays a central role in mitochondrial inner membrane fusion and cristae morphology. The transmembrane long form (L-OPA1) and the S-OPA1 form higher-order helical assemblies that coordinate the fusion of mitochondrial inner membranes. Inner membrane-anchored L-OPA1 molecules initiate membrane remodeling by recruiting soluble S-OPA1 to rapidly polymerize into a flexible cylindrical scaffold encaging the mitochondrial inner membrane. Once at the membrane surface, the formation of S-OPA1 helices induce bilayer curvature. OPA1 dimerization through the paddle region, which inserts into cardiolipin-containing membrane, promotes GTP hydrolysis and the helical assembly of a flexible OPA1 lattice on the membrane, which drives membrane curvature and mitochondrial fusion. Excess levels of S-OPA1 produced by cleavage by OMA1 following stress conditions that induce loss of mitochondrial membrane potential, lead to an impaired equilibrium between L-OPA1 and S-OPA1, thereby inhibiting mitochondrial fusion. Involved in mitochondrial safeguard in response to transient mitochondrial membrane depolarization by mediating flickering: cleavage by OMA1 leads to excess production of S-OPA1, preventing mitochondrial hyperfusion. Plays a role in the maintenance and remodeling of mitochondrial cristae, some invaginations of the mitochondrial inner membrane that provide an increase in the surface area. Probably acts by forming helical filaments at the inside of inner membrane tubes with the shape and dimensions of crista junctions. The equilibrium between L-OPA1 and S-OPA1 influences cristae shape and morphology: increased L-OPA1 levels promote cristae stacking and elongated mitochondria, while increased S-OPA1 levels correlated with irregular cristae packing and round mitochondria shape. Functionally, isoforms that contain the alternative exon 4b are required for mitochondrial genome maintenance, possibly by anchoring the mitochondrial nucleoids to the inner mitochondrial membrane. The polypeptide is Dynamin-like GTPase OPA1, mitochondrial (Mus musculus (Mouse)).